The sequence spans 536 residues: Inactive beta-amylase 9 (536 aa).

Residue Ser47 is modified to Phosphoserine. The segment at 511–536 is disordered; that stretch reads QASEAEVEAETASIGSGTGAPSLQTA.

Belongs to the glycosyl hydrolase 14 family. Mostly expressed in young floral buds, flowers and roots, and, to a later extent, in stems and leaves.

The protein resides in the cytoplasm. This Arabidopsis thaliana (Mouse-ear cress) protein is Inactive beta-amylase 9 (BAM9).